A 129-amino-acid polypeptide reads, in one-letter code: Small ribosomal subunit protein uS11 (129 aa).

Belongs to the universal ribosomal protein uS11 family. Part of the 30S ribosomal subunit. Interacts with proteins S7 and S18. Binds to IF-3.

Located on the platform of the 30S subunit, it bridges several disparate RNA helices of the 16S rRNA. Forms part of the Shine-Dalgarno cleft in the 70S ribosome. The protein is Small ribosomal subunit protein uS11 of Oceanobacillus iheyensis (strain DSM 14371 / CIP 107618 / JCM 11309 / KCTC 3954 / HTE831).